We begin with the raw amino-acid sequence, 100 residues long: ATP-dependent Clp protease adapter protein ClpS (100 aa).

Belongs to the ClpS family. Binds to the N-terminal domain of the chaperone ClpA.

Involved in the modulation of the specificity of the ClpAP-mediated ATP-dependent protein degradation. The polypeptide is ATP-dependent Clp protease adapter protein ClpS (Nitratidesulfovibrio vulgaris (strain DSM 19637 / Miyazaki F) (Desulfovibrio vulgaris)).